The following is a 481-amino-acid chain: 3-isopropylmalate dehydratase large subunit (481 aa).

The [4Fe-4S] cluster site is built by Cys-357, Cys-417, and Cys-420. The span at 429 to 441 shows a compositional bias: polar residues; the sequence is SPGQRCASTSNRN. The interval 429 to 451 is disordered; the sequence is SPGQRCASTSNRNFEGRQGKGGR.

This sequence belongs to the aconitase/IPM isomerase family. LeuC type 1 subfamily. Heterodimer of LeuC and LeuD. [4Fe-4S] cluster serves as cofactor.

The enzyme catalyses (2R,3S)-3-isopropylmalate = (2S)-2-isopropylmalate. It functions in the pathway amino-acid biosynthesis; L-leucine biosynthesis; L-leucine from 3-methyl-2-oxobutanoate: step 2/4. Catalyzes the isomerization between 2-isopropylmalate and 3-isopropylmalate, via the formation of 2-isopropylmaleate. The polypeptide is 3-isopropylmalate dehydratase large subunit (Mycobacterium sp. (strain JLS)).